Here is a 231-residue protein sequence, read N- to C-terminus: 5'-methylthioadenosine/S-adenosylhomocysteine nucleosidase (231 aa).

The active-site Proton acceptor is Glu-12. Residues Gly-78, Ile-153, and 174–175 (ME) each bind substrate. The active-site Proton donor is Asp-198.

Belongs to the PNP/UDP phosphorylase family. MtnN subfamily.

It carries out the reaction S-adenosyl-L-homocysteine + H2O = S-(5-deoxy-D-ribos-5-yl)-L-homocysteine + adenine. It catalyses the reaction S-methyl-5'-thioadenosine + H2O = 5-(methylsulfanyl)-D-ribose + adenine. The enzyme catalyses 5'-deoxyadenosine + H2O = 5-deoxy-D-ribose + adenine. It participates in amino-acid biosynthesis; L-methionine biosynthesis via salvage pathway; S-methyl-5-thio-alpha-D-ribose 1-phosphate from S-methyl-5'-thioadenosine (hydrolase route): step 1/2. Catalyzes the irreversible cleavage of the glycosidic bond in both 5'-methylthioadenosine (MTA) and S-adenosylhomocysteine (SAH/AdoHcy) to adenine and the corresponding thioribose, 5'-methylthioribose and S-ribosylhomocysteine, respectively. Also cleaves 5'-deoxyadenosine, a toxic by-product of radical S-adenosylmethionine (SAM) enzymes, into 5-deoxyribose and adenine. The protein is 5'-methylthioadenosine/S-adenosylhomocysteine nucleosidase of Shewanella putrefaciens (strain CN-32 / ATCC BAA-453).